Consider the following 533-residue polypeptide: Neuropilin and tolloid-like protein 1 (533 aa).

Residues 1–22 (MIYGRSLFHIIASLIILHSSGA) form the signal peptide. Residues 23-344 (TKKGTEKQIT…LDQLTNTSGT (322 aa)) are Extracellular-facing. Disulfide bonds link cysteine 41-cysteine 68, cysteine 96-cysteine 118, cysteine 172-cysteine 202, cysteine 229-cysteine 251, cysteine 292-cysteine 304, cysteine 299-cysteine 317, and cysteine 311-cysteine 326. CUB domains follow at residues 41-155 (CGTW…YNFT) and 172-287 (CEFE…FTSF). One can recognise an LDL-receptor class A domain in the interval 291-327 (PCEGNTFFCHSNMCINNTLVCNGLQNCVYPWDENHCK). N-linked (GlcNAc...) asparagine glycosylation occurs at asparagine 306. An N-linked (GlcNAc...) asparagine glycan is attached at asparagine 340. The chain crosses the membrane as a helical span at residues 345 to 365 (VIGVTSCIVIILIIVSVIVQI). Residues 366–533 (KQPRKKYVQR…HESEYNTTRV (168 aa)) are Cytoplasmic-facing. Residue tyrosine 417 is modified to Phosphotyrosine. Residues 531-533 (TRV) carry the PDZ-binding motif.

In terms of assembly, interacts with PLZ domains of DLG2, DLG3 and DLG4 via its C-terminal TRV domain. Interacts with GRIN2A and GRIN2B via its CUB domains. As to expression, expressed only in brain. Present throughout the central nervous system. Highly expressed in the hippocampal CA3 region, olfactory bulb and tubercle, caudate putamen, and neocortex in the adult brain.

It localises to the membrane. The protein resides in the postsynaptic density membrane. Its function is as follows. Involved in the development and/or maintenance of neuronal circuitry. Accessory subunit of the neuronal N-methyl-D-aspartate receptor (NMDAR) critical for maintaining the abundance of GRIN2A-containing NMDARs in the postsynaptic density. Regulates long-term NMDA receptor-dependent synaptic plasticity and cognition, at least in the context of spatial learning and memory. The sequence is that of Neuropilin and tolloid-like protein 1 (Neto1) from Mus musculus (Mouse).